A 2194-amino-acid polypeptide reads, in one-letter code: MAPPRGRSKRKHPSESGNSSIADSEDPSESTSSSRPRRSRLPKRYFDDGYSPPPTKKRAAQRETPSDAEEVEVKIEEISVRSTPASTPAPKSTSKARGRPKKNPTPPRRKSLKRQEEDIIYMDEDSEEEEESSDDEFMLNEDQVVQEEEEELNLTDIKIEKGLDEENKYCPWLDEDPASLPKLELPESSQDIPIPTASIMDAVEIYEILRSYHRTLRITPFTFEDFCAALISHNNSCIMAEVHMALLRNCLKSDDEEQTHYSVTETNNSVNIMIHHMDTLTYAEILRQYIEAYPFADASVRDAINVDNYPFVGYDAKLVVLLFMSYRFLYSSEFKKLVNNVGKFQNDENCRVCGKSSGRVVGCTQCEAAFHVECSHLKPFPEVLVCNICKKNSAVRGVLPPDEAVDREPLRSQPIGRDRYGRYYWFIVRRLVVQSLDETELYYYSTVPQLYQLLQKLDRTYYEKDLCDTIRLRIDEFLEQMALTVEMTSERREAALETMVKRQLIGYDFAEATTPQIYLHRDSMKRMASILRDCAQKGQVKQEVKLEEPVEGQSPVKCVQFVEDSILPESMIGIFDAKLINTFWSGGATQEELVEQFVDISDNFDAPSANLWRMGDEGNDQTFMTYYNYYSRNEMSESFLTRKKAADKKKYMASKFAQIDNFDWVVAKNRQFYGDASLHCKFIMWTLQQVIKNIPIDLMHRKWPEFAKGFDLEVSVADDYKKLVTCLLKLDCAVRKTIFMPQWWNGLGQTRLERITVDQRENFMKEQQRLKKIDADALTKDLDDSFVRVNYMKPKWPNTYILRQRGETYRNAGKGSMGGWAWVAAKYVEKWIQVPESPKLPLAVTVEEIKTESVSNRKARRLELLVSKITKKRQRSGGKSSKKPTFELTNGCYSPSCRSNPNRKCYSPMCRNGYLVSAKQAHDERKLEESGVLGEEKAWPIPEIQTFSTKRGGKSIFVLQKKILRQMIMGGGCQQVYMPGFSAGIKSNLLIWPYPAPRPTLDLCWKWQTLNARSLHAVALQLKIIWSSIKFNEFDPDDTHPDRRVVIDTPSHDERRRIIRHKEMPPYGQYERYEMEIEIIPLYDEPEEEDESWLSRNRGGSSEFSHRSSSARKKRPQRSLDNRRATAIRREWVDGVTLKVFEIKDYWKWIRAEAEKTAKRKLEATRKAQKAKEDEERRRIQQQQQRSVARIPVPMHSLIPSERNNVPYLGSQQQRRPNGNERGFLEKYNNSSSVSPQAHGYASTPPPGYHQPQPNIIRQAGYNQLPRKPTTSPFNFQSRPVATIPTTPQLRAAAGADGVVRAVMMTPGNKSTVNTNSTPYPQALNRQQYQLQRQQQQPAVRRLTNGYHFMDGTMRGGGRNPSVQMHQRLPQNRAALQRPFGESTTEMRRVTEAAIPDNDGDEQPPVIPRYDPTSNFDAQRAQQQHPQSRPVYSTPAQMIRTTQPGGVKHNVILMKASDGTQKMVLKPGQFPPGTVISTGQRVVPYRQPTAVQQRQLYTATPGTRVVRIPNANGGAPRQQDHQVMRRVVQASGPRAMEYMDDQGTPPPGQQVRYVLQGGNSGTPNVNPPKVSSRGGPRGGLTMQMVQQQQQHNPEHRRLLAGRQKQKVTTYRDFMASRGYLDTSKFMMQTKPTFLPFEFNEEEEREINEAIAREEAWMRQEEENKTSGYDSSGNPIRSITSSGDTQRAPPYVSNLLPSSNDSPDDKVIKQVLDVMFSQVCRWDRQYGWSKTHVKRARQKNDSDKMHLRKFRMNQRELLITDHMERLKKEINKRRTRMENEAEQQCGLLTPWRKARARPHRAAKPKAEVKKEVINPADITLGGDTYDYVKEQKPTESIATNVSRRRRTSANLSKSEDDRDKPESQSTAPKSKERRTSEPPASHVAFHTPGSATPHDINLSIEHCTCQKIFDASKLYIQCELCARWYHGDCVGVAEQTILGLEHWSCEECIEEQERVKDQPALYCVCQKPYDDTKFYVGCDSCQGWFHPECVGTTRAEAEQAADYNCPACTREAEGYESEASDVSGSSRVSVQLTRADYTHVFELLELLLEHRMSTPFRNPVDLNEFPDYEKFIKKPMDLSTITKKVERTEYLYLSQFVNDVNQMFENAKTYNPKGNAVFKCAETMQEVFDKKLIDVREQMTARQQMLLLATAQQQDPMSSIRKRVQSESQRTVDSLDIDSDQLLPLDANLMRLYDF.

A compositionally biased stretch (basic residues) spans 1–12 (MAPPRGRSKRKH). Residues 1-137 (MAPPRGRSKR…EEEESSDDEF (137 aa)) are disordered. A compositionally biased stretch (basic and acidic residues) spans 60 to 79 (AQRETPSDAEEVEVKIEEIS). Residues 80–93 (VRSTPASTPAPKST) are compositionally biased toward polar residues. Positions 94–112 (SKARGRPKKNPTPPRRKSL) are enriched in basic residues. Positions 118 to 137 (DIIYMDEDSEEEEESSDDEF) are enriched in acidic residues. DDT domains lie at 196-256 (TASI…SDDE) and 341-396 (VGKF…SAVR). A PHD-type 1 zinc finger spans residues 347–392 (DENCRVCGKSSGRVVGCTQCEAAFHVECSHLKPFPEVLVCNICKKN). Disordered stretches follow at residues 1091–1122 (ESWL…SLDN), 1158–1255 (AKRK…PQPN), 1413–1433 (TSNF…PVYS), 1657–1701 (MRQE…SNDS), and 1834–1888 (ESIA…HTPG). Positions 1151–1187 (RAEAEKTAKRKLEATRKAQKAKEDEERRRIQQQQQRS) form a coiled coil. Residues 1158-1179 (AKRKLEATRKAQKAKEDEERRR) show a composition bias toward basic and acidic residues. A compositionally biased stretch (polar residues) spans 1665–1684 (TSGYDSSGNPIRSITSSGDT). A compositionally biased stretch (basic and acidic residues) spans 1852 to 1861 (KSEDDRDKPE). 2 DDT domains span residues 1883-1953 (AFHT…EQER) and 1948-2014 (IEEQ…AEGY). 2 consecutive PHD-type zinc fingers follow at residues 1899-1950 (IEHC…CIEE) and 1959-2010 (ALYC…CTRE). One can recognise a Bromo domain in the interval 2030-2134 (QLTRADYTHV…EVFDKKLIDV (105 aa)).

It belongs to the BPTF family. Part of a nucleosome remodeling factor-like (NURF-like) complex containing nurf-1 and isw-1.

The protein resides in the nucleus. In terms of biological role, histone-binding component of a NURF-like (nucleosome remodeling factor-like) complex, which would catalyze ATP-dependent nucleosome sliding and facilitate transcription of chromatin. Involved in vulval cell fates. The protein is Nucleosome-remodeling factor subunit NURF301-like (nurf-1) of Caenorhabditis elegans.